The following is a 1343-amino-acid chain: Xanthine dehydrogenase (1343 aa).

In terms of domain architecture, 2Fe-2S ferredoxin-type spans 8–95 (SELVFFVNGK…GCAVTTVEGI (88 aa)). [2Fe-2S] cluster contacts are provided by cysteine 47, cysteine 52, cysteine 55, cysteine 77, cysteine 117, cysteine 120, cysteine 152, and cysteine 154. The FAD-binding PCMH-type domain occupies 235 to 424 (FSSERVTWYR…LGIHFQKTTP (190 aa)). FAD contacts are provided by residues 263–270 (LVVGNTEV), phenylalanine 343, 353–357 (CLGGN), aspartate 366, leucine 414, and lysine 432. Mo-molybdopterin-binding residues include glutamine 780 and phenylalanine 811. Substrate contacts are provided by glutamate 815 and arginine 893. Arginine 925 is a Mo-molybdopterin binding site. Phenylalanine 927 contributes to the substrate binding site. A Mo-molybdopterin-binding site is contributed by alanine 1092. Glutamate 1275 functions as the Proton acceptor in the catalytic mechanism.

This sequence belongs to the xanthine dehydrogenase family. Homodimer. Requires FAD as cofactor. It depends on Mo-molybdopterin as a cofactor. The cofactor is [2Fe-2S] cluster.

Its subcellular location is the peroxisome. The enzyme catalyses xanthine + NAD(+) + H2O = urate + NADH + H(+). The catalysed reaction is hypoxanthine + NAD(+) + H2O = xanthine + NADH + H(+). Its function is as follows. Key enzyme in purine degradation. Catalyzes the oxidation of hypoxanthine to xanthine. Catalyzes the oxidation of xanthine to uric acid. The sequence is that of Xanthine dehydrogenase (ry) from Drosophila pseudoobscura pseudoobscura (Fruit fly).